A 212-amino-acid polypeptide reads, in one-letter code: Dephospho-CoA kinase (212 aa).

The DPCK domain occupies 4-204 (IVALTGGICS…RDYLKAEKTT (201 aa)). 12 to 17 (CSGKSV) provides a ligand contact to ATP.

This sequence belongs to the CoaE family.

The protein localises to the cytoplasm. It catalyses the reaction 3'-dephospho-CoA + ATP = ADP + CoA + H(+). It functions in the pathway cofactor biosynthesis; coenzyme A biosynthesis; CoA from (R)-pantothenate: step 5/5. Its function is as follows. Catalyzes the phosphorylation of the 3'-hydroxyl group of dephosphocoenzyme A to form coenzyme A. The protein is Dephospho-CoA kinase of Blochmanniella pennsylvanica (strain BPEN).